A 296-amino-acid chain; its full sequence is 4-hydroxybenzoate octaprenyltransferase (296 aa).

Helical transmembrane passes span 23 to 43 (IGIL…SPGW), 46 to 66 (GLVL…GCVM), 99 to 119 (LALA…PLVV), 141 to 161 (IPQA…FAAI), 163 to 183 (GQLP…AIAY), 211 to 231 (DVFA…WVGV), 237 to 257 (WPYF…YALI), and 265 to 285 (CFKA…GVLA).

Belongs to the UbiA prenyltransferase family. Requires Mg(2+) as cofactor.

It is found in the cell inner membrane. The catalysed reaction is all-trans-octaprenyl diphosphate + 4-hydroxybenzoate = 4-hydroxy-3-(all-trans-octaprenyl)benzoate + diphosphate. Its pathway is cofactor biosynthesis; ubiquinone biosynthesis. Catalyzes the prenylation of para-hydroxybenzoate (PHB) with an all-trans polyprenyl group. Mediates the second step in the final reaction sequence of ubiquinone-8 (UQ-8) biosynthesis, which is the condensation of the polyisoprenoid side chain with PHB, generating the first membrane-bound Q intermediate 3-octaprenyl-4-hydroxybenzoate. The protein is 4-hydroxybenzoate octaprenyltransferase of Methylobacillus flagellatus (strain ATCC 51484 / DSM 6875 / VKM B-1610 / KT).